The primary structure comprises 808 residues: PH domain-containing protein DDB_G0275795 (808 aa).

Positions 57 to 121 (ENLEILKEIK…RNRQASQQEL (65 aa)) form a coiled coil. Residues 108 to 120 (ESTTRNRQASQQE) are compositionally biased toward polar residues. Disordered regions lie at residues 108-127 (ESTT…PPIL), 228-325 (GANA…QDEE), 339-375 (EKLK…QLQS), 405-475 (QQQQ…NGSN), 523-542 (DQTK…ELKK), and 645-675 (KGGG…SNTD). The PH domain maps to 124-216 (PPILSGYLKK…WTEGLKEFKK (93 aa)). Positions 228–248 (GANANGNGNSSPNMSSSGSYS) are enriched in low complexity. Positions 255–274 (ESSQQPLNSSTGAINTTPQR) are enriched in polar residues. The segment covering 293–321 (SHSSSSTAPDSPTLSSSYVPPPSSSNLNP) has biased composition (low complexity). The stretch at 322 to 412 (QDEELKRREN…QQQQQQQQQQ (91 aa)) forms a coiled coil. Residues 339–353 (EKLKQQDDQQQDDKQ) show a composition bias toward basic and acidic residues. Composition is skewed to low complexity over residues 354 to 375 (QQQQ…QLQS) and 405 to 414 (QQQQQQQQPP). Residues 417–428 (SPQNSRHGSTNY) show a composition bias toward polar residues. Low complexity predominate over residues 429 to 449 (SQLQQQQQQPQQQPQQQSSPQ). A compositionally biased stretch (polar residues) spans 450 to 475 (VIISNNNSPRFESQQQQNNFHNNGSN). Residues 487 to 645 (DELNKKFLKE…DKYINELLEK (159 aa)) are a coiled coil. A compositionally biased stretch (basic and acidic residues) spans 525-542 (TKTDAEEKQNKSSNELKK). Positions 654 to 673 (NSNNNNNSNNNNNNSNNNSN) are enriched in low complexity. Residues 678–734 (KESMVAHQTQNAFLLQEIQRLETQSQFKLDIKIQQIEELENQLEQQLYQFHRFREAI) are a coiled coil.

The chain is PH domain-containing protein DDB_G0275795 from Dictyostelium discoideum (Social amoeba).